A 346-amino-acid polypeptide reads, in one-letter code: Holliday junction branch migration complex subunit RuvB (346 aa).

Residues 1-182 (MSERLVTSNE…FGVLCSMEYY (182 aa)) form a large ATPase domain (RuvB-L) region. Residues leucine 21, arginine 22, glycine 63, lysine 66, threonine 67, threonine 68, 129 to 131 (EDY), arginine 172, tyrosine 182, and arginine 219 contribute to the ATP site. Threonine 67 is a binding site for Mg(2+). A small ATPAse domain (RuvB-S) region spans residues 183 to 253 (TDEQLKEIII…AAKKSLEILE (71 aa)). A head domain (RuvB-H) region spans residues 256 to 346 (GEGFDRIDNK…DSKQCTLFEK (91 aa)). DNA contacts are provided by arginine 311 and arginine 316.

It belongs to the RuvB family. As to quaternary structure, homohexamer. Forms an RuvA(8)-RuvB(12)-Holliday junction (HJ) complex. HJ DNA is sandwiched between 2 RuvA tetramers; dsDNA enters through RuvA and exits via RuvB. An RuvB hexamer assembles on each DNA strand where it exits the tetramer. Each RuvB hexamer is contacted by two RuvA subunits (via domain III) on 2 adjacent RuvB subunits; this complex drives branch migration. In the full resolvosome a probable DNA-RuvA(4)-RuvB(12)-RuvC(2) complex forms which resolves the HJ.

The protein localises to the cytoplasm. It carries out the reaction ATP + H2O = ADP + phosphate + H(+). Its function is as follows. The RuvA-RuvB-RuvC complex processes Holliday junction (HJ) DNA during genetic recombination and DNA repair, while the RuvA-RuvB complex plays an important role in the rescue of blocked DNA replication forks via replication fork reversal (RFR). RuvA specifically binds to HJ cruciform DNA, conferring on it an open structure. The RuvB hexamer acts as an ATP-dependent pump, pulling dsDNA into and through the RuvAB complex. RuvB forms 2 homohexamers on either side of HJ DNA bound by 1 or 2 RuvA tetramers; 4 subunits per hexamer contact DNA at a time. Coordinated motions by a converter formed by DNA-disengaged RuvB subunits stimulates ATP hydrolysis and nucleotide exchange. Immobilization of the converter enables RuvB to convert the ATP-contained energy into a lever motion, pulling 2 nucleotides of DNA out of the RuvA tetramer per ATP hydrolyzed, thus driving DNA branch migration. The RuvB motors rotate together with the DNA substrate, which together with the progressing nucleotide cycle form the mechanistic basis for DNA recombination by continuous HJ branch migration. Branch migration allows RuvC to scan DNA until it finds its consensus sequence, where it cleaves and resolves cruciform DNA. The polypeptide is Holliday junction branch migration complex subunit RuvB (Clostridium perfringens (strain ATCC 13124 / DSM 756 / JCM 1290 / NCIMB 6125 / NCTC 8237 / Type A)).